The primary structure comprises 320 residues: Tetraacyldisaccharide 4'-kinase (320 aa).

Residue 53–60 participates in ATP binding; it reads SVGGNGKT.

This sequence belongs to the LpxK family.

The enzyme catalyses a lipid A disaccharide + ATP = a lipid IVA + ADP + H(+). The protein operates within glycolipid biosynthesis; lipid IV(A) biosynthesis; lipid IV(A) from (3R)-3-hydroxytetradecanoyl-[acyl-carrier-protein] and UDP-N-acetyl-alpha-D-glucosamine: step 6/6. In terms of biological role, transfers the gamma-phosphate of ATP to the 4'-position of a tetraacyldisaccharide 1-phosphate intermediate (termed DS-1-P) to form tetraacyldisaccharide 1,4'-bis-phosphate (lipid IVA). The sequence is that of Tetraacyldisaccharide 4'-kinase from Psychromonas ingrahamii (strain DSM 17664 / CCUG 51855 / 37).